The chain runs to 185 residues: Elongation factor P (185 aa).

The protein belongs to the elongation factor P family.

It is found in the cytoplasm. It functions in the pathway protein biosynthesis; polypeptide chain elongation. Involved in peptide bond synthesis. Stimulates efficient translation and peptide-bond synthesis on native or reconstituted 70S ribosomes in vitro. Probably functions indirectly by altering the affinity of the ribosome for aminoacyl-tRNA, thus increasing their reactivity as acceptors for peptidyl transferase. The chain is Elongation factor P from Oleidesulfovibrio alaskensis (strain ATCC BAA-1058 / DSM 17464 / G20) (Desulfovibrio alaskensis).